The following is an 84-amino-acid chain: Acyl carrier protein homolog (84 aa).

The 76-residue stretch at 4–79 (RDILLKIKEI…ELIAEVKHLI (76 aa)) folds into the Carrier domain. Position 39 is an O-(pantetheine 4'-phosphoryl)serine (Ser39).

Post-translationally, 4'-phosphopantetheine is transferred from CoA to a specific serine of the apo-ACP-like protein.

The protein operates within lipid metabolism; fatty acid biosynthesis. In terms of biological role, carrier of the growing fatty acid chain in fatty acid biosynthesis. The chain is Acyl carrier protein homolog from Mycoplasma pneumoniae (strain ATCC 29342 / M129 / Subtype 1) (Mycoplasmoides pneumoniae).